A 359-amino-acid chain; its full sequence is DNA polymerase IV (359 aa).

The UmuC domain occupies 4–185; sequence IIHVDMDCFF…LALIKIPGVG (182 aa). 2 residues coordinate Mg(2+): aspartate 8 and aspartate 103. Glutamate 104 is an active-site residue.

It belongs to the DNA polymerase type-Y family. In terms of assembly, monomer. The cofactor is Mg(2+).

Its subcellular location is the cytoplasm. The enzyme catalyses DNA(n) + a 2'-deoxyribonucleoside 5'-triphosphate = DNA(n+1) + diphosphate. Poorly processive, error-prone DNA polymerase involved in untargeted mutagenesis. Copies undamaged DNA at stalled replication forks, which arise in vivo from mismatched or misaligned primer ends. These misaligned primers can be extended by PolIV. Exhibits no 3'-5' exonuclease (proofreading) activity. May be involved in translesional synthesis, in conjunction with the beta clamp from PolIII. The protein is DNA polymerase IV of Shewanella loihica (strain ATCC BAA-1088 / PV-4).